A 551-amino-acid chain; its full sequence is Chaperonin GroEL (551 aa).

Residues Thr30–Pro33, Lys51, Asp87–Thr91, Gly415, Asn478–Ala480, and Asp494 each bind ATP.

This sequence belongs to the chaperonin (HSP60) family. As to quaternary structure, forms a cylinder of 14 subunits composed of two heptameric rings stacked back-to-back. Interacts with the co-chaperonin GroES.

The protein resides in the cytoplasm. The enzyme catalyses ATP + H2O + a folded polypeptide = ADP + phosphate + an unfolded polypeptide.. Together with its co-chaperonin GroES, plays an essential role in assisting protein folding. The GroEL-GroES system forms a nano-cage that allows encapsulation of the non-native substrate proteins and provides a physical environment optimized to promote and accelerate protein folding. The chain is Chaperonin GroEL from Syntrophotalea carbinolica (strain DSM 2380 / NBRC 103641 / GraBd1) (Pelobacter carbinolicus).